Reading from the N-terminus, the 93-residue chain is Translation initiation factor IF-1 (93 aa).

The 72-residue stretch at 1-72 (MAKEELIQFE…EKGRLIFRHK (72 aa)) folds into the S1-like domain. Positions 70 to 93 (RHKDERPGGPPRSGPPRGGQFRRR) are disordered.

It belongs to the IF-1 family. Component of the 30S ribosomal translation pre-initiation complex which assembles on the 30S ribosome in the order IF-2 and IF-3, IF-1 and N-formylmethionyl-tRNA(fMet); mRNA recruitment can occur at any time during PIC assembly.

The protein localises to the cytoplasm. Its function is as follows. One of the essential components for the initiation of protein synthesis. Stabilizes the binding of IF-2 and IF-3 on the 30S subunit to which N-formylmethionyl-tRNA(fMet) subsequently binds. Helps modulate mRNA selection, yielding the 30S pre-initiation complex (PIC). Upon addition of the 50S ribosomal subunit IF-1, IF-2 and IF-3 are released leaving the mature 70S translation initiation complex. The chain is Translation initiation factor IF-1 from Nitrobacter winogradskyi (strain ATCC 25391 / DSM 10237 / CIP 104748 / NCIMB 11846 / Nb-255).